Consider the following 373-residue polypeptide: MLRSMWNFLKRHKKKCIFLGTVLGGVYILGKYGQKKIREIQEREAAEYIAQARRQYHFESNQRTCNMTVLSMLPTLREALMQQLNSESLTALLKNRPSNKLEIWEDLKIISFTRSIVAVYSTCMLVVLLRVQLNIIGGYIYLDNATVGKNGTTVLAPPDVQQQYLSSIQHLLGDGLTELVTVIKQAVQRILGSVSLKHSLSLLDLEQKLKEIRILVEQHRSPSWIDKDVSKSSLCQYMMPDEETPLAAQAYGLSPRDITTIKLLNETRDMLESPDFSTVLNTCLNRGFSRLLDNMAEFFRPTEQDLQHGNSINSLSSVSLPLAKIIPIVNGQIHSVCSDTPSHFVQDLLMMEQVKDFAANVYEAFSTPQQLEK.

The Cytoplasmic portion of the chain corresponds to 1 to 15; it reads MLRSMWNFLKRHKKK. The interval 1–45 is targeting to peroxisomes; it reads MLRSMWNFLKRHKKKCIFLGTVLGGVYILGKYGQKKIREIQEREA. The helical transmembrane segment at 16-36 threads the bilayer; the sequence is CIFLGTVLGGVYILGKYGQKK. Residues 37–116 are Peroxisomal-facing; it reads IREIQEREAA…LKIISFTRSI (80 aa). A helical membrane pass occupies residues 117–140; that stretch reads VAVYSTCMLVVLLRVQLNIIGGYI. The segment at 120–136 is interaction with PEX19; the sequence is YSTCMLVVLLRVQLNII. Residues 141 to 373 are Cytoplasmic-facing; it reads YLDNATVGKN…AFSTPQQLEK (233 aa).

Belongs to the peroxin-3 family. Interacts with PEX19.

Its subcellular location is the peroxisome membrane. Involved in peroxisome biosynthesis and integrity. Assembles membrane vesicles before the matrix proteins are translocated. As a docking factor for PEX19, is necessary for the import of peroxisomal membrane proteins in the peroxisomes. The polypeptide is Peroxisomal biogenesis factor 3 (PEX3) (Cricetulus longicaudatus (Long-tailed dwarf hamster)).